The primary structure comprises 45 residues: MTKRTFGGTSRKRKRVSGFRVRMRSHTGRRVIKSRRKRGRERIAV.

Residues 1–45 are disordered; sequence MTKRTFGGTSRKRKRVSGFRVRMRSHTGRRVIKSRRKRGRERIAV. Basic residues predominate over residues 10-45; it reads SRKRKRVSGFRVRMRSHTGRRVIKSRRKRGRERIAV.

This sequence belongs to the bacterial ribosomal protein bL34 family.

The sequence is that of Large ribosomal subunit protein bL34 from Prochlorococcus marinus subsp. pastoris (strain CCMP1986 / NIES-2087 / MED4).